The chain runs to 208 residues: Outer-membrane lipoprotein carrier protein (208 aa).

Residues 1 to 24 (MRMNIVQKILSATCFALLPLLAHA) form the signal peptide.

This sequence belongs to the LolA family. As to quaternary structure, monomer.

The protein resides in the periplasm. In terms of biological role, participates in the translocation of lipoproteins from the inner membrane to the outer membrane. Only forms a complex with a lipoprotein if the residue after the N-terminal Cys is not an aspartate (The Asp acts as a targeting signal to indicate that the lipoprotein should stay in the inner membrane). The chain is Outer-membrane lipoprotein carrier protein from Dechloromonas aromatica (strain RCB).